The sequence spans 236 residues: Urease accessory protein UreG (236 aa).

Positions 1–26 (MHDHSLHSGHDHGLGPGSFHDRGAPH) are disordered. A GTP-binding site is contributed by 42–49 (GPVGSGKT).

Belongs to the SIMIBI class G3E GTPase family. UreG subfamily. Homodimer. UreD, UreF and UreG form a complex that acts as a GTP-hydrolysis-dependent molecular chaperone, activating the urease apoprotein by helping to assemble the nickel containing metallocenter of UreC. The UreE protein probably delivers the nickel.

It localises to the cytoplasm. In terms of biological role, facilitates the functional incorporation of the urease nickel metallocenter. This process requires GTP hydrolysis, probably effectuated by UreG. In Anaeromyxobacter sp. (strain Fw109-5), this protein is Urease accessory protein UreG.